The primary structure comprises 211 residues: MAPSRNGMILKPHFHKDWQRRVDTWFNQPARKIRRRKARQAKARRIAPRPASGPIRPIVRCPTVRYHTKVRAGRGFSLEELRVAGIHKKVARTIGISVDPRRRNKSTESLQANVQRLKEYRSKLILFPRKPSAPKKGDSSAEELKLATQLTGPVMRIRNVYKKEKARVITEEEKNFKAFASLRMARANARLFGIRAKRAKEAAEQDVEKKK.

K16 carries the post-translational modification N6-acetyllysine. 3 positions are modified to phosphoserine: S52, S77, and S106. Residues K123 and K145 each participate in a glycyl lysine isopeptide (Lys-Gly) (interchain with G-Cter in SUMO2) cross-link. K174 is covalently cross-linked (Glycyl lysine isopeptide (Lys-Gly) (interchain with G-Cter in SUMO1); alternate). Glycyl lysine isopeptide (Lys-Gly) (interchain with G-Cter in SUMO2); alternate cross-links involve residues K174 and K177. K177 bears the N6-acetyllysine; alternate mark.

The protein belongs to the eukaryotic ribosomal protein eL13 family. In terms of assembly, component of the 60S large ribosomal subunit (LSU).

The protein localises to the cytoplasm. Component of the ribosome, a large ribonucleoprotein complex responsible for the synthesis of proteins in the cell. The small ribosomal subunit (SSU) binds messenger RNAs (mRNAs) and translates the encoded message by selecting cognate aminoacyl-transfer RNA (tRNA) molecules. The large subunit (LSU) contains the ribosomal catalytic site termed the peptidyl transferase center (PTC), which catalyzes the formation of peptide bonds, thereby polymerizing the amino acids delivered by tRNAs into a polypeptide chain. The nascent polypeptides leave the ribosome through a tunnel in the LSU and interact with protein factors that function in enzymatic processing, targeting, and the membrane insertion of nascent chains at the exit of the ribosomal tunnel. As part of the LSU, it is probably required for its formation and the maturation of rRNAs. Plays a role in bone development. The chain is Large ribosomal subunit protein eL13 (RPL13) from Cricetulus griseus (Chinese hamster).